The sequence spans 107 residues: Anti-adapter protein IraM (107 aa).

It belongs to the IraM/RssC family.

It is found in the cytoplasm. Its function is as follows. Inhibits RpoS proteolysis by regulating RssB activity, thereby increasing the stability of the sigma stress factor RpoS during magnesium starvation. In Shigella sonnei (strain Ss046), this protein is Anti-adapter protein IraM.